A 161-amino-acid polypeptide reads, in one-letter code: Small ribosomal subunit protein uS9 (161 aa).

It belongs to the universal ribosomal protein uS9 family.

This Methylobacterium radiotolerans (strain ATCC 27329 / DSM 1819 / JCM 2831 / NBRC 15690 / NCIMB 10815 / 0-1) protein is Small ribosomal subunit protein uS9.